The following is a 235-amino-acid chain: Probable tetraspanin tspB (235 aa).

At 1–23 the chain is on the cytoplasmic side; sequence MVDTTNLIPNTPRYLKVPLIAFN. The chain crosses the membrane as a helical span at residues 24-44; that stretch reads TILWVLGLVLVIIGSIGVSFF. The Extracellular segment spans residues 45–68; sequence SNFKDFTKVSKASAALSNLTTGAP. N-linked (GlcNAc...) asparagine glycosylation occurs at Asn-62. Residues 69–89 form a helical membrane-spanning segment; the sequence is AGVLVIGIFFVILTVIGCFVA. At 90–93 the chain is on the cytoplasmic side; that stretch reads GKEK. A helical membrane pass occupies residues 94–114; the sequence is LVGLVIYTMLMLIILVALIGV. At 115 to 200 the chain is on the extracellular side; that stretch reads GGKALTLHND…ISSNLYLVGA (86 aa). 2 N-linked (GlcNAc...) asparagine glycosylation sites follow: Asn-143 and Asn-159. A helical membrane pass occupies residues 201-221; it reads AAVSIGVIEFICMLFALFLII. Residues 222 to 235 lie on the Cytoplasmic side of the membrane; the sequence is RICRAPRTKSYDYQ.

This sequence belongs to the tetraspanin (TM4SF) family.

The protein resides in the membrane. The chain is Probable tetraspanin tspB (tspB) from Dictyostelium discoideum (Social amoeba).